The primary structure comprises 361 residues: Probable mannitol dehydrogenase (361 aa).

Residues Cys51, His73, Cys104, Cys107, Cys110, Cys118, and Cys167 each coordinate Zn(2+).

This sequence belongs to the zinc-containing alcohol dehydrogenase family. The cofactor is Zn(2+).

It carries out the reaction D-mannitol + NAD(+) = D-mannose + NADH + H(+). Functionally, oxidizes mannitol to mannose. Provides the initial step by which translocated mannitol is committed to central metabolism and, by regulating mannitol pool size, is important in regulating salt tolerance at the cellular level. In Mesembryanthemum crystallinum (Common ice plant), this protein is Probable mannitol dehydrogenase (ELI3).